The sequence spans 1941 residues: Integrin beta-like protein B (1941 aa).

A signal peptide spans 1 to 20 (MKNIIKYLFIFLCFLIITEA). The Extracellular segment spans residues 21 to 1871 (THFRYGTISW…VTTQNSSNKT (1851 aa)). The EGF-like domain maps to 420–457 (YGDKCTVLPPCKNGVPNGGVNGDGKCLCNNGWTGSDCS). 2 cysteine pairs are disulfide-bonded: Cys-430–Cys-445 and Cys-447–Cys-456. Residues 513-696 (DVYLLVDANM…AGIKAVSSKL (184 aa)) enclose the VWFA domain. 10 N-linked (GlcNAc...) asparagine glycosylation sites follow: Asn-1400, Asn-1505, Asn-1530, Asn-1606, Asn-1652, Asn-1738, Asn-1777, Asn-1848, Asn-1866, and Asn-1869. The chain crosses the membrane as a helical span at residues 1872–1892 (VLSGAIAGAAAGTALIAAAMW). Topologically, residues 1893–1941 (KMLRKAAPPTDAFFDEGAFLGDGVNSNPMYQESKNGGENPLYLASNETL) are cytoplasmic. The interval 1921–1941 (MYQESKNGGENPLYLASNETL) is disordered.

This sequence belongs to the SIB family. Interacts with talA/talin.

The protein resides in the membrane. Functionally, implicated in cellular adhesion. This is Integrin beta-like protein B (sibB) from Dictyostelium discoideum (Social amoeba).